The primary structure comprises 195 residues: Thymidine kinase (195 aa).

ATP is bound by residues 15-22, Glu23, 57-58, and 88-91; these read GPMYSGKS, SH, and DEVQ. Glu89 functions as the Proton acceptor in the catalytic mechanism. Phe120 is a substrate binding site. Zn(2+) is bound by residues Cys145 and Cys148. Tyr179 lines the substrate pocket. 2 residues coordinate Zn(2+): Cys183 and Cys186.

It belongs to the thymidine kinase family.

It localises to the cytoplasm. It catalyses the reaction thymidine + ATP = dTMP + ADP + H(+). This is Thymidine kinase from Clostridium acetobutylicum (strain ATCC 824 / DSM 792 / JCM 1419 / IAM 19013 / LMG 5710 / NBRC 13948 / NRRL B-527 / VKM B-1787 / 2291 / W).